The primary structure comprises 191 residues: MLKKTLAALALGSALFTAGQAMAADYKIDKEGQHAFIEFRIKHLGYSWLYGRFNDFDGSFTFDEKNPSADKVKVTINTNSVDTNHAERDKHLRSGDFLNVGKNPTATFESTEVKANGDSADITGNLTLNGVTKPVTIKAKLLGQGNDPWGGYRAGFEGSATLKLKDFGIKMDLGPASQEVELLLSVEGIRQ.

An N-terminal signal peptide occupies residues 1–23; that stretch reads MLKKTLAALALGSALFTAGQAMA.

The protein belongs to the UPF0312 family. Type 1 subfamily.

The protein resides in the periplasm. This chain is UPF0312 protein PSPA7_0523, found in Pseudomonas paraeruginosa (strain DSM 24068 / PA7) (Pseudomonas aeruginosa (strain PA7)).